Consider the following 465-residue polypeptide: MDNEKVTDTNPKEPSNVESIITTSEVTPSPPPSTTTSTTTNATTTITTSQPQANIIGGKRSRKDDEIISIQEALNDQLEEEKNLLEEAKEQEQEDWGDESICTFDKGYINQSVFACKTCQLSNDKLFGFCYGCSMHCHLYHDVYELFNKRNFRCDCGTKIQEPNNSFKCQLSGILKEDDNNNVNNINNSNNTTTTTTTTTTTTTTTNNNHLNDIDIGSYDKSQILNERNHYNHNFKGKYCYCDSPYDYKEDMIQCIFCEDWFHENCLKLNSNVTDIPSPGEFSDLICADCLSKNQFLLLYPQIRCYIENDHIIIGDNNNNNNNSNNSNSICKVEGGVITPNKKYDLFCKELWKDELCSCLKCKEIYKDKKVEFLFEKDENSLKKKNKTVDENLDNKPVNVFEMGQDVFSKTLPPTQQRALIEGFSDMKEKLKELFSKKLDKNQVITKQDIQSFFVDLNVNKKFKK.

The segment covering 1-11 has biased composition (basic and acidic residues); that stretch reads MDNEKVTDTNP. A disordered region spans residues 1–47; the sequence is MDNEKVTDTNPKEPSNVESIITTSEVTPSPPPSTTTSTTTNATTTIT. A compositionally biased stretch (polar residues) spans 12-21; the sequence is KEPSNVESII. A compositionally biased stretch (low complexity) spans 34–47; that stretch reads TTTSTTTNATTTIT. Residues 65–98 are a coiled coil; the sequence is DEIISIQEALNDQLEEEKNLLEEAKEQEQEDWGD. A UBR-type zinc finger spans residues 100 to 174; it reads SICTFDKGYI…NSFKCQLSGI (75 aa). Residues 183 to 202 form a disordered region; the sequence is VNNINNSNNTTTTTTTTTTT. The segment at 237–293 adopts a PHD-type zinc-finger fold; that stretch reads GKYCYCDSPYDYKEDMIQCIFCEDWFHENCLKLNSNVTDIPSPGEFSDLICADCLSK.

This sequence belongs to the UBR7 family.

It carries out the reaction S-ubiquitinyl-[E2 ubiquitin-conjugating enzyme]-L-cysteine + [acceptor protein]-L-lysine = [E2 ubiquitin-conjugating enzyme]-L-cysteine + N(6)-ubiquitinyl-[acceptor protein]-L-lysine.. It participates in protein modification; protein ubiquitination. Functionally, putative E3 ubiquitin-protein ligase. The sequence is that of Putative E3 ubiquitin-protein ligase ubr7 (ubr7) from Dictyostelium discoideum (Social amoeba).